Reading from the N-terminus, the 582-residue chain is GPI-anchor transamidase component PIGT (582 aa).

Positions 1 to 25 (MAAAMPLGLPLRLLVLLLVGRGCCG) are cleaved as a signal peptide. Topologically, residues 26–529 (CAEGPRDSLR…NLPTPDFSMP (504 aa)) are lumenal. N-linked (GlcNAc...) asparagine glycosylation is present at Asn-168. Disulfide bonds link Cys-199–Cys-276 and Cys-230–Cys-235. Residues Asn-295 and Asn-331 are each glycosylated (N-linked (GlcNAc...) asparagine). A 2-acyl-6-[6-phosphoethanolamine-alpha-D-mannosyl-(1-&gt;2)-6-phosphoethanolamine-alpha-D-mannosyl-(1-&gt;6)-2-phosphoethanolamine-alpha-D-mannosyl-(1-&gt;4)-alpha-D-glucosaminyl]-1-(1-radyl,2-acyl-sn-glycero-3-phospho)-1D-myo-inositol is bound by residues Asn-465, Asp-525, Ser-527, and Asn-531. A helical transmembrane segment spans residues 530–552 (YNVICLTCTVVAVCYGSFYNLLT). Topologically, residues 553 to 582 (RTFHIEEPKSGGLAKRLANLIRRARGVPPL) are cytoplasmic.

It belongs to the PIGT family. In terms of assembly, heteropentamer. Part of the GPI-anchor transamidase complex, consisting of PIGK, PIGT, PIGS, PIGU and GAA1. In terms of processing, the disulfide bond between PIGK/GPI8 and PIGT is important for normal enzyme activity.

The protein localises to the endoplasmic reticulum membrane. Its pathway is glycolipid biosynthesis; glycosylphosphatidylinositol-anchor biosynthesis. Component of the glycosylphosphatidylinositol-anchor (GPI-anchor) transamidase (GPI-T) complex that catalyzes the formation of the linkage between a proprotein and a GPI-anchor and participates in GPI anchored protein biosynthesis. May play a crucial role in GPI-T complex assembly in the luminal layer. Binds GPI-anchor. This chain is GPI-anchor transamidase component PIGT, found in Mus musculus (Mouse).